A 27-amino-acid polypeptide reads, in one-letter code: Toxin Bcg III 21.00 (27 aa).

It localises to the secreted. The protein resides in the nematocyst. In terms of biological role, possible voltage-gated potassium channel (Kv) blocker. The polypeptide is Toxin Bcg III 21.00 (Bunodosoma cangicum (Sea anemone)).